The chain runs to 211 residues: 3-demethoxyubiquinol 3-hydroxylase (211 aa).

The Fe cation site is built by Glu-60, Glu-90, His-93, Glu-142, Glu-174, and His-177.

It belongs to the COQ7 family. Fe cation serves as cofactor.

Its subcellular location is the cell membrane. The enzyme catalyses a 5-methoxy-2-methyl-3-(all-trans-polyprenyl)benzene-1,4-diol + AH2 + O2 = a 3-demethylubiquinol + A + H2O. It participates in cofactor biosynthesis; ubiquinone biosynthesis. In terms of biological role, catalyzes the hydroxylation of 2-nonaprenyl-3-methyl-6-methoxy-1,4-benzoquinol during ubiquinone biosynthesis. This Acinetobacter baylyi (strain ATCC 33305 / BD413 / ADP1) protein is 3-demethoxyubiquinol 3-hydroxylase.